An 850-amino-acid polypeptide reads, in one-letter code: Mitochondrial escape protein 2 (850 aa).

A mitochondrion-targeting transit peptide spans 1–44 (MLLVRTTSLNVSRMPVPCLARGIGILKGKYRLANLMNAQPSVRH). Residues 44–66 (HVSSEIQQKDQQAGESNTATDTG) are disordered. At 45-287 (VSSEIQQKDQ…VSNFFTNHTR (243 aa)) the chain is on the mitochondrial matrix side. Over residues 47–64 (SEIQQKDQQAGESNTATD) the composition is skewed to polar residues. Residues 198–272 (TTIVIKFQGP…TVLHIQYENI (75 aa)) form the RRM domain. Residues 288 to 308 (IAIPVLFALLSIFAVLVFDPI) form a helical membrane-spanning segment. The Mitochondrial intermembrane segment spans residues 309–850 (REFSIEQKIT…CEEEIKNLSK (542 aa)). Residues 607–621 (KGENVKEPESEKEIA) show a composition bias toward basic and acidic residues. The interval 607-633 (KGENVKEPESEKEIAENNDSDSEADTS) is disordered.

Belongs to the YME2 family.

The protein resides in the mitochondrion inner membrane. In terms of biological role, plays a role in maintaining the mitochondrial genome and in controlling the mtDNA escape. Involved in the regulation of mtDNA nucleotide structure and number. May have a dispensable role in early maturation of pre-rRNA. This Saccharomyces cerevisiae (strain YJM789) (Baker's yeast) protein is Mitochondrial escape protein 2 (YME2).